Consider the following 151-residue polypeptide: UPF0178 protein YaiI (151 aa).

Belongs to the UPF0178 family.

This chain is UPF0178 protein YaiI, found in Salmonella enteritidis PT4 (strain P125109).